The following is a 431-amino-acid chain: Glutamate-1-semialdehyde 2,1-aminomutase (431 aa).

Lys269 bears the N6-(pyridoxal phosphate)lysine mark.

Belongs to the class-III pyridoxal-phosphate-dependent aminotransferase family. HemL subfamily. Homodimer. The cofactor is pyridoxal 5'-phosphate.

The protein resides in the cytoplasm. The enzyme catalyses (S)-4-amino-5-oxopentanoate = 5-aminolevulinate. Its pathway is porphyrin-containing compound metabolism; protoporphyrin-IX biosynthesis; 5-aminolevulinate from L-glutamyl-tRNA(Glu): step 2/2. This chain is Glutamate-1-semialdehyde 2,1-aminomutase, found in Tolumonas auensis (strain DSM 9187 / NBRC 110442 / TA 4).